A 202-amino-acid chain; its full sequence is MDYFPMIFALLFVAFQGAPEAAVLGTELSAGAEDGGEKPAPATPWRPRRSKRCSCSSLMDKECVYFCHLDIIWVNTPEHVVPYGLGSPSRSKRSLKDFFPTKATVHRKRCQCASQTDKKCWNFCQAGKELRDQDSMEKAWNNQKRGKDCSKLGEKCLHQQLVAGRKTRRLEAISNSIKTSFRVAKLKAQLYRDKKVIYNRAH.

The N-terminal stretch at 1 to 25 (MDYFPMIFALLFVAFQGAPEAAVLG) is a signal peptide. The propeptide occupies 26 to 50 (TELSAGAEDGGEKPAPATPWRPRRS). Intrachain disulfides connect C53-C67 and C55-C63. The propeptide occupies 74–202 (VNTPEHVVPY…DKKVIYNRAH (129 aa)). The endothelin-like stretch occupies residues 110–124 (CQCASQTDKKCWNFC).

This sequence belongs to the endothelin/sarafotoxin family.

It is found in the secreted. Its function is as follows. Endothelins are endothelium-derived vasoconstrictor peptides. Probable ligand for G-protein coupled receptors EDNRA and EDNRB which activates PTK2B, BCAR1, BCAR3 and, GTPases RAP1 and RHOA cascade in glomerular mesangial cells. Also binds the DEAR/FBXW7-AS1 receptor. Promotes mesenteric arterial wall remodeling via activation of ROCK signaling and subsequent colocalization of NFATC3 with F-actin filaments. NFATC3 then translocates to the nucleus where it subsequently promotes the transcription of the smooth muscle hypertrophy and differentiation marker ACTA2. This Bos taurus (Bovine) protein is Endothelin-1 (EDN1).